Consider the following 87-residue polypeptide: Glutaredoxin 1 (87 aa).

The Glutaredoxin domain maps to 1–87; it reads MFTVIFGRPG…WAKENLNLFA (87 aa). A disulfide bridge links C11 with C14.

This sequence belongs to the glutaredoxin family. In terms of assembly, monomer.

Its function is as follows. The disulfide bond functions as an electron carrier in the glutathione-dependent synthesis of deoxyribonucleotides by the enzyme ribonucleotide reductase. In addition, it is also involved in reducing some disulfides in a coupled system with glutathione reductase. In Salmonella typhi, this protein is Glutaredoxin 1 (grxA).